The following is a 465-amino-acid chain: Ribosomal protein uS12 methylthiotransferase RimO (465 aa).

The MTTase N-terminal domain occupies 1-117 (MKVGFISLGC…IVDICEGMPP (117 aa)). The [4Fe-4S] cluster site is built by Cys10, Cys46, Cys80, Cys150, Cys154, and Cys157. The region spanning 136–369 (ATPRHFAYMK…AIQRKIARAR (234 aa)) is the Radical SAM core domain. One can recognise a TRAM domain in the interval 371–442 (RGLVGKEVPV…DYDVVGTLLA (72 aa)).

The protein belongs to the methylthiotransferase family. RimO subfamily. The cofactor is [4Fe-4S] cluster.

It is found in the cytoplasm. It catalyses the reaction L-aspartate(89)-[ribosomal protein uS12]-hydrogen + (sulfur carrier)-SH + AH2 + 2 S-adenosyl-L-methionine = 3-methylsulfanyl-L-aspartate(89)-[ribosomal protein uS12]-hydrogen + (sulfur carrier)-H + 5'-deoxyadenosine + L-methionine + A + S-adenosyl-L-homocysteine + 2 H(+). Functionally, catalyzes the methylthiolation of an aspartic acid residue of ribosomal protein uS12. The chain is Ribosomal protein uS12 methylthiotransferase RimO from Solibacter usitatus (strain Ellin6076).